The sequence spans 307 residues: D-alanine--D-alanine ligase (307 aa).

The 201-residue stretch at 101 to 301 (RDVLAAAGVP…FGELVRWMVD (201 aa)) folds into the ATP-grasp domain. 128 to 182 (LPPPYVIKPLGEGSSFGVFIVREDQAYPPQELTRSDWAFGNRVLVESYIGGRELT) contacts ATP. Asp251, Glu268, and Asn270 together coordinate Mg(2+).

This sequence belongs to the D-alanine--D-alanine ligase family. Mg(2+) serves as cofactor. Mn(2+) is required as a cofactor.

It localises to the cytoplasm. It carries out the reaction 2 D-alanine + ATP = D-alanyl-D-alanine + ADP + phosphate + H(+). Its pathway is cell wall biogenesis; peptidoglycan biosynthesis. Its function is as follows. Cell wall formation. This Beijerinckia indica subsp. indica (strain ATCC 9039 / DSM 1715 / NCIMB 8712) protein is D-alanine--D-alanine ligase.